A 311-amino-acid chain; its full sequence is Transmembrane protein DDB_G0273707/DDB_G0273361 (311 aa).

The tract at residues 1-113 (MNEIEVDNLS…NNNNNKNENN (113 aa)) is disordered. A glycan (N-linked (GlcNAc...) asparagine) is linked at Asn-8. Positions 9-18 (LSHTNKNVAT) are enriched in polar residues. Asn-35, Asn-38, Asn-62, and Asn-76 each carry an N-linked (GlcNAc...) asparagine glycan. Composition is skewed to low complexity over residues 37–67 (SNNS…SNSN) and 76–111 (NNSN…NKNE). Residues 95-124 (NNNNNNNNNNNNNNKNENNNKIKNEKINIL) adopt a coiled-coil conformation. 5 helical membrane passes run 150–170 (LEEI…LALL), 181–201 (IFLL…PKSP), 208–228 (LVLG…ALVY), 235–255 (VACA…KSIH), and 276–296 (FYYI…TALI).

It is found in the membrane. The protein is Transmembrane protein DDB_G0273707/DDB_G0273361 of Dictyostelium discoideum (Social amoeba).